The chain runs to 470 residues: Diaminobutyrate--2-oxoglutarate aminotransferase (470 aa).

At Lys-304 the chain carries N6-(pyridoxal phosphate)lysine.

It belongs to the class-III pyridoxal-phosphate-dependent aminotransferase family. The cofactor is pyridoxal 5'-phosphate.

It catalyses the reaction L-2,4-diaminobutanoate + 2-oxoglutarate = L-aspartate 4-semialdehyde + L-glutamate. Its pathway is siderophore biosynthesis; rhizobactin biosynthesis. This chain is Diaminobutyrate--2-oxoglutarate aminotransferase (rhbA), found in Rhizobium meliloti (strain 1021) (Ensifer meliloti).